The chain runs to 251 residues: 2,3-bisphosphoglycerate-dependent phosphoglycerate mutase (251 aa).

Substrate-binding positions include 11 to 18 (RHGESDWN), 24 to 25 (TG), R63, 90 to 93 (ERHY), K101, 117 to 118 (RR), and 184 to 185 (GN). The active-site Tele-phosphohistidine intermediate is the H12. Catalysis depends on E90, which acts as the Proton donor/acceptor.

The protein belongs to the phosphoglycerate mutase family. BPG-dependent PGAM subfamily.

The enzyme catalyses (2R)-2-phosphoglycerate = (2R)-3-phosphoglycerate. The protein operates within carbohydrate degradation; glycolysis; pyruvate from D-glyceraldehyde 3-phosphate: step 3/5. In terms of biological role, catalyzes the interconversion of 2-phosphoglycerate and 3-phosphoglycerate. This is 2,3-bisphosphoglycerate-dependent phosphoglycerate mutase from Mycobacterium ulcerans (strain Agy99).